Consider the following 390-residue polypeptide: Chorismate synthase 1 (390 aa).

Arginine 39 and arginine 45 together coordinate NADP(+). The disordered stretch occupies residues 95–117 (EQEEKEMKRKVTKPRPGHADLNG). FMN-binding positions include 132–134 (RSS), 253–254 (NA), glycine 298, 313–317 (KPIPT), and arginine 339.

Belongs to the chorismate synthase family. As to quaternary structure, homotetramer. The cofactor is FMNH2.

It carries out the reaction 5-O-(1-carboxyvinyl)-3-phosphoshikimate = chorismate + phosphate. It participates in metabolic intermediate biosynthesis; chorismate biosynthesis; chorismate from D-erythrose 4-phosphate and phosphoenolpyruvate: step 7/7. Functionally, catalyzes the anti-1,4-elimination of the C-3 phosphate and the C-6 proR hydrogen from 5-enolpyruvylshikimate-3-phosphate (EPSP) to yield chorismate, which is the branch point compound that serves as the starting substrate for the three terminal pathways of aromatic amino acid biosynthesis. This reaction introduces a second double bond into the aromatic ring system. This chain is Chorismate synthase 1, found in Bacillus cereus (strain ZK / E33L).